A 282-amino-acid polypeptide reads, in one-letter code: NADPH-dependent 7-cyano-7-deazaguanine reductase (282 aa).

Residue 88 to 90 (IES) participates in substrate binding. Residue 90–91 (SK) participates in NADPH binding. The active-site Thioimide intermediate is Cys-189. Asp-196 functions as the Proton donor in the catalytic mechanism. 228-229 (HE) contacts substrate. Position 257–258 (257–258 (RG)) interacts with NADPH.

Belongs to the GTP cyclohydrolase I family. QueF type 2 subfamily. In terms of assembly, homodimer.

The protein localises to the cytoplasm. The enzyme catalyses 7-aminomethyl-7-carbaguanine + 2 NADP(+) = 7-cyano-7-deazaguanine + 2 NADPH + 3 H(+). Its pathway is tRNA modification; tRNA-queuosine biosynthesis. Its function is as follows. Catalyzes the NADPH-dependent reduction of 7-cyano-7-deazaguanine (preQ0) to 7-aminomethyl-7-deazaguanine (preQ1). The sequence is that of NADPH-dependent 7-cyano-7-deazaguanine reductase from Photorhabdus laumondii subsp. laumondii (strain DSM 15139 / CIP 105565 / TT01) (Photorhabdus luminescens subsp. laumondii).